Here is a 408-residue protein sequence, read N- to C-terminus: Neutral cholesterol ester hydrolase 1 (408 aa).

At 1–4 (MRSS) the chain is on the cytoplasmic side. A helical; Signal-anchor for type II membrane protein transmembrane segment spans residues 5 to 25 (CVLLTALVALAAYYVYIPLPG). Over 26-408 (SVSDPWKLML…SYIKWLDQNL (383 aa)) the chain is Lumenal. The Involved in the stabilization of the negatively charged intermediate by the formation of the oxyanion hole signature appears at 113 to 115 (HGG). Serine 191 is an active-site residue. Asparagine 270 and asparagine 287 each carry an N-linked (GlcNAc...) asparagine glycan. Catalysis depends on residues aspartate 348 and histidine 378. A glycan (N-linked (GlcNAc...) asparagine) is linked at asparagine 389.

This sequence belongs to the 'GDXG' lipolytic enzyme family. N-glycosylated.

It is found in the cell membrane. It localises to the microsome. The enzyme catalyses a 1-O-alkyl-2-acetyl-sn-glycerol + H2O = a 1-O-alkyl-sn-glycerol + acetate + H(+). It carries out the reaction 1-O-hexadecyl-2-acetyl-sn-glycerol + H2O = 1-O-hexadecyl-sn-glycerol + acetate + H(+). The catalysed reaction is a cholesterol ester + H2O = cholesterol + a fatty acid + H(+). It catalyses the reaction cholesteryl (9Z-octadecenoate) + H2O = cholesterol + (9Z)-octadecenoate + H(+). Hydrolyzes 2-acetyl monoalkylglycerol ether (1-O-alkyl-2-acetyl-sn-glycerol), the penultimate precursor of the pathway for de novo synthesis of platelet-activating factor. May be responsible for the hydrolysis of cholesterol esters (such as cholesteryl (9Z-octadecenoate)) in macrophages. Also involved in organ detoxification by hydrolyzing exogenous organophosphorus compounds. In Pongo abelii (Sumatran orangutan), this protein is Neutral cholesterol ester hydrolase 1 (NCEH1).